A 191-amino-acid polypeptide reads, in one-letter code: Neuronal calcium sensor 1 (191 aa).

Glycine 2 carries N-myristoyl glycine lipidation. EF-hand domains are found at residues 24 to 59, 60 to 95, 96 to 131, and 144 to 179; these read ESEIKQWHKGFRKDCPDGKLTLEGFTKIYQQFFPFG, DPSKFANFVFNVFDENKDGFISFSEFLQALSVTSRG, TVEEKLKWAFRLYDLDNDGYITRDELLDIVDAIYRM, and TPEKRVNRIFQVMDKNKDDQLTFEEFLEGSKEDPTI. Ca(2+) contacts are provided by aspartate 73, asparagine 75, aspartate 77, glutamate 84, aspartate 109, aspartate 111, aspartate 113, tyrosine 115, glutamate 120, aspartate 157, asparagine 159, aspartate 161, glutamine 163, and glutamate 168.

The protein belongs to the recoverin family.

The protein localises to the perikaryon. The protein resides in the cell projection. It localises to the growth cone. Its function is as follows. Neuronal calcium sensor, regulator of G protein-coupled receptor phosphorylation in a calcium dependent manner. Regulates neurite extension and branching by activity-dependent Ca(2+) influx in growth cones. In Lymnaea stagnalis (Great pond snail), this protein is Neuronal calcium sensor 1.